The following is a 79-amino-acid chain: Metallothionein-like protein type 2 (79 aa).

The protein belongs to the metallothionein superfamily. Type 15 family.

Metallothioneins have a high content of cysteine residues that bind various heavy metals. The chain is Metallothionein-like protein type 2 (MT1) from Malus domestica (Apple).